The primary structure comprises 451 residues: MDDENGLELSLGLSLGGTSGKSKARDAPLEPKAEPQVEESSSKGVSQTPEAPFVHYYQTNAENQEHSSKQRHSPAAPPFGNFWGQPGSSSVPVADGSNEQKPVSSKRKLLSEEISFQKKPNTAAEQPDAFSKSSDGGVKNAPISISTDDGSTGENEDVAESEAEGSNSWLVAQREDSAKGSVVNRGSDRKRSSDDAAVGFQGKRQPSFSGSESSSGKLPQGNPLSLQASNVVAVPYQVPSQVSAPPSITNASNFTPVCTVQLRPPTNNGLAVTMGSTSQVAFGYPAVQLPTLETSSSWAFGAPPQAMSSFTAKDKVERAGISQADDGKKTQEAGASSSALVEDDKKSDRALPLMGSAIRPGIAPNVKFGGSGSYPDLPWVSTTGTGPNGRTISGVTYKFGRNEVKIVCACHGTHMTPEEFMRHASADAPGQENSATLPAFPVGNQAASAQN.

3 disordered regions span residues 1 to 223 (MDDE…QGNP), 321 to 346 (ISQA…DDKK), and 427 to 451 (DAPG…SAQN). The segment covering 23 to 35 (KARDAPLEPKAEP) has biased composition (basic and acidic residues). 3 stretches are compositionally biased toward polar residues: residues 38-49 (EESSSKGVSQTP), 86-103 (PGSS…QKPV), and 143-153 (ISISTDDGSTG). A compositionally biased stretch (acidic residues) spans 154–163 (ENEDVAESEA). Positions 207-216 (SFSGSESSSG) are enriched in low complexity.

Belongs to the Ninja family. Interacts with TIFY10C/JAZ8. Interacts with TIFY11A/JAZ9.

It is found in the nucleus. This Oryza sativa subsp. japonica (Rice) protein is Protein NINJA homolog 1.